A 363-amino-acid polypeptide reads, in one-letter code: MLNKGLAEEELFSFLSKKREEDLCHSHILSSMCTVPHPIAVKAHLMFMETNLGDPGLFPGTASLERLLIERLGDLFHHREAGGYATSGGTESNIQALRIAKAQKKVDKPNVVIPETSHFSFKKACDILGIQMKTVPADRSMRTDISEVSDAIDKNTIALVGIAGSTEYGMVDDIGALATIAEEEDLYLHVDAAFGGLVIPFLPNPPAFDFALPGVSSIAVDPHKMGMSTLPAGALLVREPQMLGLLNIDTPYLTVKQEYTLAGTRPGASVAGALAVLDYMGRDGMEAVVAGCMKNTSRLIRGMETLGFPRAVTPDVNVATFITNHPAPKNWVVSQTRRGHMRIICMPHVTADMIEQFLIDIGE.

Lysine 224 carries the N6-(pyridoxal phosphate)lysine modification.

It belongs to the group II decarboxylase family. MfnA subfamily. It depends on pyridoxal 5'-phosphate as a cofactor.

The enzyme catalyses L-tyrosine + H(+) = tyramine + CO2. It carries out the reaction L-aspartate + H(+) = beta-alanine + CO2. The protein operates within cofactor biosynthesis; methanofuran biosynthesis. It functions in the pathway cofactor biosynthesis; coenzyme A biosynthesis. Catalyzes the decarboxylation of L-tyrosine to produce tyramine for methanofuran biosynthesis. Can also catalyze the decarboxylation of L-aspartate to produce beta-alanine for coenzyme A (CoA) biosynthesis. This chain is Probable L-tyrosine/L-aspartate decarboxylase, found in Methanosphaerula palustris (strain ATCC BAA-1556 / DSM 19958 / E1-9c).